Consider the following 84-residue polypeptide: Anaphase-promoting complex subunit 11 (84 aa).

The RING-type; atypical zinc finger occupies 34–77 (CPDCKLPGDDCPLIWGACNHAFHLHCILKWVNSQTSQAHCPMCR).

Belongs to the RING-box family. Part of the APC/C complex composed of at least 10 subunits. Interacts with APC2.

It is found in the cytoplasm. It localises to the nucleus. Its pathway is protein modification; protein ubiquitination. Component of the anaphase promoting complex/cyclosome (APC/C), a cell cycle-regulated E3 ubiquitin-protein ligase complex that controls progression through mitosis and the G1 phase of the cell cycle. The APC/C complex controls several key steps in the cell cycle by mediating ubiquitination and subsequent degradation of target proteins such as cyclins. The APC/C complex is required for the female gametophyte development and is involved in several aspect of development by controlling cell division and cell elongation. Involved in the control of endoreduplication. May recruit the E2 ubiquitin-conjugating enzymes to the complex. The sequence is that of Anaphase-promoting complex subunit 11 from Arabidopsis thaliana (Mouse-ear cress).